Here is a 68-residue protein sequence, read N- to C-terminus: DNA-directed RNA polymerase subunit omega (68 aa).

Belongs to the RNA polymerase subunit omega family. As to quaternary structure, the RNAP catalytic core consists of 2 alpha, 1 beta, 1 beta' and 1 omega subunit. When a sigma factor is associated with the core the holoenzyme is formed, which can initiate transcription.

It catalyses the reaction RNA(n) + a ribonucleoside 5'-triphosphate = RNA(n+1) + diphosphate. Functionally, promotes RNA polymerase assembly. Latches the N- and C-terminal regions of the beta' subunit thereby facilitating its interaction with the beta and alpha subunits. The sequence is that of DNA-directed RNA polymerase subunit omega from Neisseria gonorrhoeae (strain NCCP11945).